The sequence spans 498 residues: Ammonium transporter 1 member 1 (498 aa).

Helical transmembrane passes span 39-59 (LLFSAYLVFAMQLGFAMLCAG), 74-94 (VLDAAAGALFYYLFGFAFAFG), 120-140 (FFLFQWAFAIAAAGITSGSIA), 148-168 (YLIYSAFLTGFVYPVVSHWIW), 192-212 (FAGSGVVHMVGGVAGLWGALI), 236-256 (LVVLGTFLLWFGWYGFNPGSF), 274-296 (SGVGRTAVTTTLAGSVAALTTLF), 307-327 (VVDVCNGLLGGFAAITAGCSV), 331-351 (WAAIICGFVSAWVLIGLNALA), 360-380 (LEAAQLHGGCGAWGILFTALF), and 411-431 (VIQILVIFGWVSCTMGPLFYG).

Belongs to the ammonia transporter channel (TC 1.A.11.2) family. Expressed in roots and shoots.

The protein resides in the membrane. Ammonium transporter probably involved in ammonium uptake from the soil. The protein is Ammonium transporter 1 member 1 (AMT1-1) of Oryza sativa subsp. japonica (Rice).